The sequence spans 801 residues: Phenylalanine--tRNA ligase beta subunit (801 aa).

The tRNA-binding domain maps to 39-153 (AEGLSKLVVG…EEAVPGDAIF (115 aa)). The B5 domain maps to 406 to 481 (TEPVEVSTSL…RIYGYDKLPT (76 aa)). Residues aspartate 459, aspartate 465, glutamate 468, and glutamate 469 each coordinate Mg(2+). An FDX-ACB domain is found at 708–801 (TKFPAMTRDI…LTEQVGAEVR (94 aa)).

This sequence belongs to the phenylalanyl-tRNA synthetase beta subunit family. Type 1 subfamily. Tetramer of two alpha and two beta subunits. The cofactor is Mg(2+).

The protein resides in the cytoplasm. It carries out the reaction tRNA(Phe) + L-phenylalanine + ATP = L-phenylalanyl-tRNA(Phe) + AMP + diphosphate + H(+). This is Phenylalanine--tRNA ligase beta subunit from Streptococcus pyogenes serotype M18 (strain MGAS8232).